Consider the following 329-residue polypeptide: Cardiolipin synthase (CMP-forming) (329 aa).

The N-terminal 34 residues, 1-34, are a transit peptide targeting the mitochondrion; the sequence is MPPSVATHASLLLKAAAAAAHLHPKPFFSPRAAP. The segment at 27-55 is disordered; that stretch reads FFSPRAAPPRIPSAPAPPAAGGSRYRPTT. The span at 32 to 44 shows a compositional bias: pro residues; it reads AAPPRIPSAPAPP. A run of 5 helical transmembrane segments spans residues 134–154, 156–176, 194–214, 228–248, and 298–318; these read LLTL…LLIS, FYME…AAAV, FGAF…LVLL, PWLL…MSAV, and VTSG…SLVV. Topologically, residues 319-329 are mitochondrial intermembrane; it reads YMRKIWRILLK.

Belongs to the CDP-alcohol phosphatidyltransferase class-I family. Mn(2+) serves as cofactor.

It localises to the mitochondrion inner membrane. The catalysed reaction is a CDP-1,2-diacyl-sn-glycerol + a 1,2-diacyl-sn-glycero-3-phospho-(1'-sn-glycerol) = a cardiolipin + CMP + H(+). Functionally, catalyzes the synthesis of cardiolipin (CL) (diphosphatidylglycerol) by specifically transferring a phosphatidyl group from CDP-diacylglycerol to phosphatidylglycerol (PG). CL is a key phospholipid in mitochondrial membranes and plays important roles in maintaining the functional integrity and dynamics of mitochondria under both optimal and stress conditions. In Oryza sativa subsp. japonica (Rice), this protein is Cardiolipin synthase (CMP-forming).